Consider the following 601-residue polypeptide: Kelch repeat and BTB domain-containing protein 8 (601 aa).

Residues 1–25 are disordered; the sequence is MAASADLSKSSPTPNGIPSSDPASD. The span at 7–22 shows a compositional bias: polar residues; sequence LSKSSPTPNGIPSSDP. In terms of domain architecture, BTB spans 49–117; the sequence is TDIVVEVDHG…AYTSRVILTE (69 aa). Residues 153–252 enclose the BACK domain; the sequence is IGVFIFADHY…PLMEDTFIEK (100 aa). Kelch repeat units follow at residues 336-390, 391-441, 443-481, 483-532, and 542-588; these read DIYI…YCCG, KMYA…EYKE, IYVLQGEFFLFYEPQKDYWGFLTPMTVPRIQGLAAVYKD, IYYI…LFQN, and QVTV…FECA.

It belongs to the KBTBD8 family. In terms of assembly, component of the BCR(KBTBD8) E3 ubiquitin ligase complex, at least composed of CUL3, KBTBD8 and RBX1.

The protein resides in the cytoplasm. It is found in the cytoskeleton. The protein localises to the spindle. It localises to the golgi apparatus. Functionally, substrate-specific adapter of a BCR (BTB-CUL3-RBX1) E3 ubiquitin ligase complex that acts as a regulator of neural crest specification. The BCR(KBTBD8) complex acts by mediating monoubiquitination of NOLC1 and TCOF1: monoubiquitination promotes the formation of a NOLC1-TCOF1 complex that acts as a platform to connect RNA polymerase I with enzymes responsible for ribosomal processing and modification, leading to remodel the translational program of differentiating cells in favor of neural crest specification. The sequence is that of Kelch repeat and BTB domain-containing protein 8 (KBTBD8) from Homo sapiens (Human).